Reading from the N-terminus, the 294-residue chain is MNNATKRVVVPALEEILYEPIKVLDHGFIRVIDYMGDDSAIVQAARVSYGKGTKQLNQDKGLINYLLRHYHTTPFEMCDIKFHIKLPIFIARQWIRHRTASVNEYSARYSILGNEFYLPEPQNIAPQSSTNKQCRESDSLPKEVAEKVLNILEEDARNCYKHYTKLMNTDEEGNIIDDNNTGIARELARMNLTLNYYTEWYWKINLHNLLHFLRLRADPHAQYEIRVYAEKMLDIVKAWVPFTYEAFEEYRMCGANISRKGLEVIKKMISGEKVTHETSGMTKREWEELTKILK.

Residues 27 to 250 (GFIRVIDYMG…PFTYEAFEEY (224 aa)) form the ThyX domain. FAD-binding positions include Thr73, 96–98 (RHR), and Glu104. Residues 93–96 (QWIR), 104–108 (EYSAR), and Arg189 contribute to the dUMP site. A ThyX motif motif is present at residues 96 to 106 (RHRTASVNEYS). FAD-binding positions include 205-207 (NLH) and His211. Residue Arg216 coordinates dUMP. The active-site Involved in ionization of N3 of dUMP, leading to its activation is Arg216.

Belongs to the thymidylate synthase ThyX family. Homotetramer. It depends on FAD as a cofactor.

It carries out the reaction dUMP + (6R)-5,10-methylene-5,6,7,8-tetrahydrofolate + NADPH + H(+) = dTMP + (6S)-5,6,7,8-tetrahydrofolate + NADP(+). Its pathway is pyrimidine metabolism; dTTP biosynthesis. Catalyzes the reductive methylation of 2'-deoxyuridine-5'-monophosphate (dUMP) to 2'-deoxythymidine-5'-monophosphate (dTMP) while utilizing 5,10-methylenetetrahydrofolate (mTHF) as the methyl donor, and NADPH and FADH(2) as the reductant. The polypeptide is Flavin-dependent thymidylate synthase (Rickettsia bellii (strain RML369-C)).